A 324-amino-acid chain; its full sequence is Quinolinate synthase (324 aa).

Iminosuccinate contacts are provided by histidine 39 and serine 56. Cysteine 101 contacts [4Fe-4S] cluster. Residues 127–129 and serine 144 contribute to the iminosuccinate site; that span reads YIN. Cysteine 187 is a binding site for [4Fe-4S] cluster. Iminosuccinate is bound by residues 213–215 and threonine 230; that span reads HPE. Position 280 (cysteine 280) interacts with [4Fe-4S] cluster.

Belongs to the quinolinate synthase family. Type 2 subfamily. The cofactor is [4Fe-4S] cluster.

The protein localises to the cytoplasm. It carries out the reaction iminosuccinate + dihydroxyacetone phosphate = quinolinate + phosphate + 2 H2O + H(+). The protein operates within cofactor biosynthesis; NAD(+) biosynthesis; quinolinate from iminoaspartate: step 1/1. Functionally, catalyzes the condensation of iminoaspartate with dihydroxyacetone phosphate to form quinolinate. The polypeptide is Quinolinate synthase (Nostoc sp. (strain PCC 7120 / SAG 25.82 / UTEX 2576)).